A 73-amino-acid polypeptide reads, in one-letter code: UPF0346 protein Lreu_0775 (73 aa).

It belongs to the UPF0346 family.

The polypeptide is UPF0346 protein Lreu_0775 (Limosilactobacillus reuteri (strain DSM 20016) (Lactobacillus reuteri)).